We begin with the raw amino-acid sequence, 349 residues long: MPRNPKSFRLAARNIFLTYPQCDIPKDEALQMLQTLSWSVVKPTYIRVAREEHSDGFPHLHCLIQLSGKSNIKDARFFDITHPRRSANFHPNIQAAKDTNAVKNYITKDGDYCESGQYKVSGGTKANKDDVYHNAVNAGCVEEALAIIRAGDPKTFIVSYHNVRANIERLFTKAPEPWAPPFQLSSFTNVPDEMSSWADDYFGRSAAARAERPISIIVEGDSRTGKTMWARALGPHNYLSGHLDFNSKVFSNNAEYNVIDDIAPHYLKLKHWKELIGAQRDWQSNCKYGKPVQIKGGIPSIVLCNPGEGSSYISFLNKEENASLRAWTTKNAKFITLEAPLYQSTAQDC.

One can recognise a CRESS-DNA virus Rep endonuclease domain in the interval 9-118 (RLAARNIFLT…DGDYCESGQY (110 aa)). Positions 16–19 (FLTY) match the RCR-1 motif. Residues glutamate 51, histidine 59, and histidine 61 each contribute to the a divalent metal cation site. The short motif at 59 to 61 (HLH) is the RCR-2 element. The active-site For DNA cleavage activity is tyrosine 105. Positions 105 to 108 (YITK) match the RCR-3 motif. Aspartate 109 is a binding site for a divalent metal cation. Residues 141–151 (VEEALAIIRAG) form a binding to RBR1 region. Residues 154 to 174 (KTFIVSYHNVRANIERLFTKA) form an oligomerization region. Residue 220 to 227 (GDSRTGKT) participates in ATP binding.

It belongs to the geminiviridae Rep protein family. As to quaternary structure, homooligomer. Interacts with the replication enhancer protein (REn). Interacts with host retinoblastoma-related protein 1 (RBR1), and may thereby induce the transcription of host replicative enzymes even if the cell is not dividing anymore. Interacts with host PCNA. Interacts with host SCE1 protein. Mg(2+) serves as cofactor. Mn(2+) is required as a cofactor.

The protein resides in the host nucleus. Functionally, essential for the replication of viral ssDNA. The closed circular ssDNA genome is first converted to a superhelical dsDNA. Rep binds a specific region at the genome origin of replication. It introduces an endonucleolytic nick within the conserved sequence 5'-TAATATTAC-3' in the intergenic region of the genome present in all geminiviruses, thereby initiating the rolling circle replication (RCR). Following cleavage, binds covalently to the 5'-phosphate of DNA as a tyrosyl ester. The cleavage gives rise to a free 3'-OH that serves as a primer for the cellular DNA polymerase. The polymerase synthesizes the (+) strand DNA by rolling circle mechanism. After one round of replication, a Rep-catalyzed nucleotidyl transfer reaction releases a circular single-stranded virus genome, thereby terminating the replication. Displays origin-specific DNA cleavage, nucleotidyl transferase, ATPase and helicase activities. The chain is Replication-associated protein from Cabbage leaf curl virus (isolate Jamaica) (CaLCuV).